A 129-amino-acid chain; its full sequence is MSFPKYKPSSLRTLPETLDPAEYNISPETRRAQAERLAIRAQLKREYLLQYNDPNRRGLIENPALLRWAYARTINVYPNFRPTPKNSLMGALCGFGPLIFIYYIIKTERDRKEKLIQEGKLDRTFHLSY.

Residue S2 is modified to N-acetylserine. S26 is modified (phosphoserine). The chain crosses the membrane as a helical span at residues 88–105 (LMGALCGFGPLIFIYYII).

The protein belongs to the complex I NDUFB4 subunit family. In terms of assembly, complex I is composed of 45 different subunits.

It is found in the mitochondrion inner membrane. Functionally, accessory subunit of the mitochondrial membrane respiratory chain NADH dehydrogenase (Complex I), that is believed not to be involved in catalysis. Complex I functions in the transfer of electrons from NADH to the respiratory chain. The immediate electron acceptor for the enzyme is believed to be ubiquinone. This is NADH dehydrogenase [ubiquinone] 1 beta subcomplex subunit 4 (NDUFB4) from Gorilla gorilla gorilla (Western lowland gorilla).